The following is a 129-amino-acid chain: Beta-galactoside-binding lectin (129 aa).

Residue S1 is modified to N-acetylserine. In terms of domain architecture, Galectin spans 4 to 129 (GVVDERMSFK…EARIYSIEIK (126 aa)). Position 69–75 (69–75 (WGTEQRE)) interacts with a beta-D-galactoside.

This protein binds beta-galactoside. Its physiological function is not yet known. In Electrophorus electricus (Electric eel), this protein is Beta-galactoside-binding lectin.